The chain runs to 281 residues: Imidazole glycerol phosphate synthase subunit HisF (281 aa).

Active-site residues include Asp-12 and Asp-131. Positions 256-281 (VRQAEPLPQPAREGLGDSARRAMSSG) are disordered.

The protein belongs to the HisA/HisF family. In terms of assembly, heterodimer of HisH and HisF.

The protein resides in the cytoplasm. It catalyses the reaction 5-[(5-phospho-1-deoxy-D-ribulos-1-ylimino)methylamino]-1-(5-phospho-beta-D-ribosyl)imidazole-4-carboxamide + L-glutamine = D-erythro-1-(imidazol-4-yl)glycerol 3-phosphate + 5-amino-1-(5-phospho-beta-D-ribosyl)imidazole-4-carboxamide + L-glutamate + H(+). It functions in the pathway amino-acid biosynthesis; L-histidine biosynthesis; L-histidine from 5-phospho-alpha-D-ribose 1-diphosphate: step 5/9. In terms of biological role, IGPS catalyzes the conversion of PRFAR and glutamine to IGP, AICAR and glutamate. The HisF subunit catalyzes the cyclization activity that produces IGP and AICAR from PRFAR using the ammonia provided by the HisH subunit. The polypeptide is Imidazole glycerol phosphate synthase subunit HisF (Thermosynechococcus vestitus (strain NIES-2133 / IAM M-273 / BP-1)).